A 398-amino-acid polypeptide reads, in one-letter code: 4-hydroxy-3-methylbut-2-enyl diphosphate reductase (398 aa).

A [4Fe-4S] cluster-binding site is contributed by Cys66. His96 is a (2E)-4-hydroxy-3-methylbut-2-enyl diphosphate binding site. His96 contributes to the dimethylallyl diphosphate binding site. Position 96 (His96) interacts with isopentenyl diphosphate. Cys157 serves as a coordination point for [4Fe-4S] cluster. His185 lines the (2E)-4-hydroxy-3-methylbut-2-enyl diphosphate pocket. Residue His185 coordinates dimethylallyl diphosphate. Residue His185 participates in isopentenyl diphosphate binding. Glu187 (proton donor) is an active-site residue. (2E)-4-hydroxy-3-methylbut-2-enyl diphosphate is bound at residue Thr250. Cys288 lines the [4Fe-4S] cluster pocket. Residues Ser317, Ser318, Asn319, and Ser379 each coordinate (2E)-4-hydroxy-3-methylbut-2-enyl diphosphate. The dimethylallyl diphosphate site is built by Ser317, Ser318, Asn319, and Ser379. Isopentenyl diphosphate contacts are provided by Ser317, Ser318, Asn319, and Ser379.

The protein belongs to the IspH family. Requires [4Fe-4S] cluster as cofactor.

It catalyses the reaction isopentenyl diphosphate + 2 oxidized [2Fe-2S]-[ferredoxin] + H2O = (2E)-4-hydroxy-3-methylbut-2-enyl diphosphate + 2 reduced [2Fe-2S]-[ferredoxin] + 2 H(+). The catalysed reaction is dimethylallyl diphosphate + 2 oxidized [2Fe-2S]-[ferredoxin] + H2O = (2E)-4-hydroxy-3-methylbut-2-enyl diphosphate + 2 reduced [2Fe-2S]-[ferredoxin] + 2 H(+). The protein operates within isoprenoid biosynthesis; dimethylallyl diphosphate biosynthesis; dimethylallyl diphosphate from (2E)-4-hydroxy-3-methylbutenyl diphosphate: step 1/1. It functions in the pathway isoprenoid biosynthesis; isopentenyl diphosphate biosynthesis via DXP pathway; isopentenyl diphosphate from 1-deoxy-D-xylulose 5-phosphate: step 6/6. In terms of biological role, catalyzes the conversion of 1-hydroxy-2-methyl-2-(E)-butenyl 4-diphosphate (HMBPP) into a mixture of isopentenyl diphosphate (IPP) and dimethylallyl diphosphate (DMAPP). Acts in the terminal step of the DOXP/MEP pathway for isoprenoid precursor biosynthesis. In Synechococcus sp. (strain CC9311), this protein is 4-hydroxy-3-methylbut-2-enyl diphosphate reductase.